Consider the following 189-residue polypeptide: Protein GrpE (189 aa).

Residues 1–21 (MADEQNLDNQNPETPEQSQAD) are disordered. Polar residues predominate over residues 7 to 20 (LDNQNPETPEQSQA).

The protein belongs to the GrpE family. In terms of assembly, homodimer.

Its subcellular location is the cytoplasm. Participates actively in the response to hyperosmotic and heat shock by preventing the aggregation of stress-denatured proteins, in association with DnaK and GrpE. It is the nucleotide exchange factor for DnaK and may function as a thermosensor. Unfolded proteins bind initially to DnaJ; upon interaction with the DnaJ-bound protein, DnaK hydrolyzes its bound ATP, resulting in the formation of a stable complex. GrpE releases ADP from DnaK; ATP binding to DnaK triggers the release of the substrate protein, thus completing the reaction cycle. Several rounds of ATP-dependent interactions between DnaJ, DnaK and GrpE are required for fully efficient folding. This is Protein GrpE from Stutzerimonas stutzeri (strain A1501) (Pseudomonas stutzeri).